The following is a 911-amino-acid chain: DNA ligase 4 (911 aa).

12 residues coordinate ATP: glutamate 271, threonine 272, lysine 273, leucine 274, arginine 278, glutamate 331, lysine 345, phenylalanine 367, glutamate 427, lysine 432, lysine 449, and lysine 451. The active-site N6-AMP-lysine intermediate is lysine 273. A Mg(2+)-binding site is contributed by glutamate 331. Mg(2+) is bound at residue glutamate 427. A required for catalytic activity region spans residues leucine 610–aspartate 620. BRCT domains lie at lysine 654 to methionine 743 and serine 808 to isoleucine 911.

It belongs to the ATP-dependent DNA ligase family. Interacts with XRCC4; the LIG4-XRCC4 subcomplex has a 1:2 stoichiometry and XRCC4 is required for LIG4 stability. Component of the core long-range non-homologous end joining (NHEJ) complex (also named DNA-PK complex) composed of PRKDC, LIG4, XRCC4, XRCC6/Ku70, XRCC5/Ku86 and NHEJ1/XLF. Additional component of the NHEJ complex includes PAXX. Following autophosphorylation, PRKDC dissociates from DNA, leading to formation of the short-range NHEJ complex, composed of LIG4, XRCC4, XRCC6/Ku70, XRCC5/Ku86 and NHEJ1/XLF. Interacts with DCLRE1C; the interaction is direct. Interacts with APLF. Mg(2+) is required as a cofactor.

Its subcellular location is the nucleus. It carries out the reaction ATP + (deoxyribonucleotide)n-3'-hydroxyl + 5'-phospho-(deoxyribonucleotide)m = (deoxyribonucleotide)n+m + AMP + diphosphate.. Its function is as follows. DNA ligase involved in DNA non-homologous end joining (NHEJ); required for double-strand break (DSB) repair and V(D)J recombination. Catalyzes the NHEJ ligation step of the broken DNA during DSB repair by resealing the DNA breaks after the gap filling is completed. Joins single-strand breaks in a double-stranded polydeoxynucleotide in an ATP-dependent reaction. LIG4 is mechanistically flexible: it can ligate nicks as well as compatible DNA overhangs alone, while in the presence of XRCC4, it can ligate ends with 2-nucleotides (nt) microhomology and 1-nt gaps. Forms a subcomplex with XRCC4; the LIG4-XRCC4 subcomplex is responsible for the NHEJ ligation step and XRCC4 enhances the joining activity of LIG4. Binding of the LIG4-XRCC4 complex to DNA ends is dependent on the assembly of the DNA-dependent protein kinase complex DNA-PK to these DNA ends. LIG4 regulates nuclear localization of XRCC4. The chain is DNA ligase 4 from Pongo abelii (Sumatran orangutan).